Reading from the N-terminus, the 253-residue chain is Porin thermoregulatory protein EnvY (253 aa).

Positions 149–246 constitute an HTH araC/xylS-type domain; that stretch reads DSVCRIIQSD…GLTPLNYLAK (98 aa). 2 consecutive DNA-binding regions (H-T-H motif) follow at residues 166 to 187 and 213 to 236; these read RIVA…KNEN and ITQV…KAFY.

Its function is as follows. Influences the temperature-dependent expression of several E.coli envelope proteins, most notably the porins OmpF and OmpC and the lambda receptor, LamB. This Escherichia coli (strain K12) protein is Porin thermoregulatory protein EnvY (envY).